Reading from the N-terminus, the 357-residue chain is Meiotic driver wtf9 (357 aa).

A disordered region spans residues 1–39; the sequence is MKNKYYPLRSSMDEMSAKNDNEIDLEKGPLPEYNSEDGS. Positions 11-29 are enriched in basic and acidic residues; it reads SMDEMSAKNDNEIDLEKGP. Transmembrane regions (helical) follow at residues 89 to 109, 119 to 139, 149 to 169, 198 to 218, 232 to 252, 256 to 276, and 286 to 306; these read LLIS…CVNP, AFFV…FCFF, CIKV…ISLA, VVII…RSKF, CSIS…FWTL, FSGL…TKGL, and ATGY…LFFY.

This sequence belongs to the WTF family. Homomer. Forms protein aggregates. The two isoforms can interact with each other and with themselves. High sequence similarity is required for their interaction.

It localises to the spore membrane. The protein localises to the vacuole membrane. It is found in the ascus epiplasm. The protein resides in the cytoplasm. Its subcellular location is the endoplasmic reticulum membrane. Promotes unequal transmission of alleles from the parental zygote to progeny spores by acting as poison/antidote system where the poison and antidote proteins are produced from the same locus; the poison component is trans-acting and targets all spores within an ascus whereas the antidote component is spore-specific, leading to poisoning of all progeny that do not inherit the allele. In terms of biological role, localizes isoform 2 to the vacuole thereby facilitating its degradation. Functionally, forms toxic aggregates that disrupt spore maturation. In Schizosaccharomyces kambucha (Fission yeast), this protein is Meiotic driver wtf9.